A 329-amino-acid polypeptide reads, in one-letter code: 4-hydroxythreonine-4-phosphate dehydrogenase (329 aa).

Substrate-binding residues include H136 and T137. The a divalent metal cation site is built by H166, H211, and H266. Residues K274, N283, and R292 each coordinate substrate.

It belongs to the PdxA family. In terms of assembly, homodimer. It depends on Zn(2+) as a cofactor. Mg(2+) serves as cofactor. Co(2+) is required as a cofactor.

It localises to the cytoplasm. It catalyses the reaction 4-(phosphooxy)-L-threonine + NAD(+) = 3-amino-2-oxopropyl phosphate + CO2 + NADH. Its pathway is cofactor biosynthesis; pyridoxine 5'-phosphate biosynthesis; pyridoxine 5'-phosphate from D-erythrose 4-phosphate: step 4/5. Its function is as follows. Catalyzes the NAD(P)-dependent oxidation of 4-(phosphooxy)-L-threonine (HTP) into 2-amino-3-oxo-4-(phosphooxy)butyric acid which spontaneously decarboxylates to form 3-amino-2-oxopropyl phosphate (AHAP). The sequence is that of 4-hydroxythreonine-4-phosphate dehydrogenase from Pseudomonas syringae pv. tomato (strain ATCC BAA-871 / DC3000).